We begin with the raw amino-acid sequence, 1282 residues long: MTLQETSVLEPTLQGTTTLPGLLAQRVAEHPEAIAVAYRDDKLTFRELASRSAALADYLEHLGVSADDCVGLFVEPSIDLMVGAWGILNAGAAYLPLSPEYPEDRLRYMIENSETKIILAQQRLVSRLRELAPKDVTIVTLRESEAFVRPEGTEAPAARSARPDTLAYVIYTSGSTGKPKGVMIEHRSIVNQLGWLRETYAIDRSKVILQKTPMSFDAAQWEILSPANGATVVMGAPGVYADPEGLIETIVKHNVTTLQCVPTLLQGLIDTEKFPECVSLQQIFSGGEALSRLLAIQTTQEMPGRALINVYGPTETTINSSSFPVDPADLDEGPQSISIGSPVHGTTYHILDKETLKPVGVGEIGELYIGGIQLARGYLHRDDLTAERFLEIELEEGAEPVRLYKTGDLGQWNNDGTVQFAGRADNQVKLRGYRVELDEISLAIENHDWVRNAAVIVKNDGRTGFQNLIACIELSEKEAALMDQGNHGSHHASKKSKLQVKAQLSNPGLRDDAELAARPAFDLEGAEPTPEQRARVFARKTYRFYEGGAVTQADLLGLLGATVTAGYSRKAADLAPAELGQILRWFGQYISEERLLPKYGYASPGALYATQMYFELEGVGGLKPGYYYYQPVRHQLVLISEREATGKATAQIHFIGKKSGIEPVYKNNILEVLEIETGHMVGLFEQILPAYGLDIHDRAYEPAVKDLLDVADEDYYLGTFELVPHAGARDDQAEVYVQTHGGKVAGLPEGQYRYENGELTRFSDDIVLKKHVIAINQSVYQAASFGISVYSRAEEEWLKYITLGKKLQHLMMNGLNLGFMSSGYSSKTGNPLPASRRMDAVLGANGVDSAPMYFFVGGRISDEQIGHEGMREDSVHMRGPAELIRDDLVSFLPDYMIPNRVVVFDRLPLSANGKIDVKALAASDQVNAELVERPFVAPRTETEKEIAAVWEKALRRENASVQDDFFESGGNSLIAVGLVRELNARLGVSLPLQSVLESPTIEKLARRLEREVAQESSRFVRLHAETGKARPVICWPGLGGYPMNLRSLAGEIGLGRSFYGVQSYGINEGETPYETITEMAKKDIEALKEIQPAGPYTLWGYSFGARVAFETAYQLEQAGEKVDNLFLIAPGSPKVRAENGKVWGREASFANRGYTTILFSVFTGTISGPDLDRCLETVTDEASFAEFISELKGIDVDLARRIISVVGQTYEFEYSFHELAERTLQAPISIFKAVGDDYSFLENSSGYSAEPPTVIDLDADHYSLLREDIGELVKHIRYLLGE.

The interval 24 to 379 is adenylation; it reads AQRVAEHPEA…GGIQLARGYL (356 aa). One can recognise a Carrier domain in the interval 937 to 1012; the sequence is APRTETEKEI…KLARRLEREV (76 aa). Position 972 is an O-(pantetheine 4'-phosphoryl)serine (S972). The segment at 1030–1138 is thioesterase; sequence RPVICWPGLG…APGSPKVRAE (109 aa).

Belongs to the ATP-dependent AMP-binding enzyme family. Pantetheine 4'-phosphate serves as cofactor.

The catalysed reaction is 2 FMN + 2 L-glutamine + 2 ATP + O2 = indigoidine + 2 FMNH2 + 2 AMP + 2 diphosphate + 2 H2O. It catalyses the reaction FMN + L-glutamine + ATP = 3-amino-1,5-dihydropyridine-2,6-dione + FMNH2 + AMP + diphosphate. It carries out the reaction 2 3-amino-1,5-dihydropyridine-2,6-dione + O2 = indigoidine + 2 H2O. Its pathway is pigment biosynthesis. In terms of biological role, nonribosomal peptide synthetase involved in the biosynthesis of the blue pigment indigoidine. Catalyzes the synthesis of the blue pigment using L-Gln as a substrate. Two glutamine molecules are cyclized and oxidized to form indigoidine. This is Indigoidine synthase from Streptomyces lavendulae.